Consider the following 533-residue polypeptide: NAD(P)H-quinone oxidoreductase chain 4 (533 aa).

15 helical membrane-spanning segments follow: residues 5–25 (VPWLSLSILVPIVGALLVPLV), 36–56 (WYALIVTLITFLITVAAYLTG), 70–90 (VSWLPDLGLTWAVGADGLSMP), 91–111 (LILLTSFITSLACLAAWPVSF), 115–135 (LFYFLLLAMDGGQIAVFAVQD), 137–157 (LLFFLAWELELIPVYLLLAIW), 169–189 (FILYTAGSSLFILLAALAMGF), 210–230 (GFQLLCYAGLLIAFGVKLPIV), 244–264 (TAPVHMLLAGILLKMGGYALL), 278–298 (FAPLLIVLGVVNIIYAALTSF), 315–335 (MGFVLIGVGSFSALGTSGAML), 336–356 (QMISHGLIGASLFFLVGATYD), 377–397 (FALWTVCALASLALPGMSGFV), 418–438 (VVICGLAAVGVILTPIYLLSM), and 465–485 (VYIIGCLLVPIIGIGLYPKLM).

This sequence belongs to the complex I subunit 4 family.

It localises to the cellular thylakoid membrane. The catalysed reaction is a plastoquinone + NADH + (n+1) H(+)(in) = a plastoquinol + NAD(+) + n H(+)(out). The enzyme catalyses a plastoquinone + NADPH + (n+1) H(+)(in) = a plastoquinol + NADP(+) + n H(+)(out). NDH-1 shuttles electrons from NAD(P)H, via FMN and iron-sulfur (Fe-S) centers, to quinones in the respiratory chain. The immediate electron acceptor for the enzyme in this species is believed to be plastoquinone. Couples the redox reaction to proton translocation (for every two electrons transferred, four hydrogen ions are translocated across the cytoplasmic membrane), and thus conserves the redox energy in a proton gradient. The polypeptide is NAD(P)H-quinone oxidoreductase chain 4 (Synechococcus sp. (strain CC9605)).